The primary structure comprises 164 residues: Glycine cleavage system H protein, mitochondrial (164 aa).

The transit peptide at 1–34 directs the protein to the mitochondrion; the sequence is MALRLWASSAANALKISCSGATRAAPAYSISRYF. Positions 56–138 constitute a Lipoyl-binding domain; that stretch reads VATIGITDHA…YEDGWMIKVK (83 aa). N6-lipoyllysine is present on lysine 97.

The protein belongs to the GcvH family. In terms of assembly, the glycine cleavage system is composed of four proteins: P, T, L and H. (R)-lipoate serves as cofactor.

The protein localises to the mitochondrion. In terms of biological role, the glycine cleavage system catalyzes the degradation of glycine. The H protein shuttles the methylamine group of glycine from the P protein to the T protein. This is Glycine cleavage system H protein, mitochondrial (GDCSH) from Oryza sativa subsp. indica (Rice).